A 385-amino-acid polypeptide reads, in one-letter code: Mannitol-1-phosphate 5-dehydrogenase (385 aa).

4-15 (AVHFGAGNIGRG) is a binding site for NAD(+).

The protein belongs to the mannitol dehydrogenase family.

The enzyme catalyses D-mannitol 1-phosphate + NAD(+) = beta-D-fructose 6-phosphate + NADH + H(+). The polypeptide is Mannitol-1-phosphate 5-dehydrogenase (Lactococcus lactis subsp. lactis (strain IL1403) (Streptococcus lactis)).